The chain runs to 458 residues: Bifunctional thioredoxin reductase/thioredoxin (458 aa).

Residues 1–321 (MNTTPSAHET…LAEHAGSKAN (321 aa)) form a thioredoxin reductase region. FAD is bound by residues 19–22 (SGPA), 41–48 (EGTSFGGA), Asn-57, and Val-90. Residues Cys-142 and Cys-145 are joined by a disulfide bond. Residues Ser-163, His-182, Arg-188, Ile-245, and Tyr-265 each coordinate NADP(+). FAD-binding positions include Asp-285 and 292-295 (RQAI). Position 292 (Arg-292) interacts with NADP(+). Residues 322–347 (ETTEETGDVDSTDTTDWSTAMTDAKN) are linker. A Thioredoxin domain is found at 341-455 (AMTDAKNAGV…LLRDLSDVVP (115 aa)). The cysteines at positions 379 and 382 are disulfide-linked.

This sequence in the N-terminal section; belongs to the class-II pyridine nucleotide-disulfide oxidoreductase family. As to quaternary structure, homodimer. The cofactor is FAD.

The protein resides in the cytoplasm. It catalyses the reaction [thioredoxin]-dithiol + NADP(+) = [thioredoxin]-disulfide + NADPH + H(+). The sequence is that of Bifunctional thioredoxin reductase/thioredoxin (trxB/A) from Mycobacterium leprae (strain TN).